The chain runs to 84 residues: Large ribosomal subunit protein bL27 (84 aa).

Residues Met1–Arg25 form a disordered region.

The protein belongs to the bacterial ribosomal protein bL27 family.

In Dehalococcoides mccartyi (strain ATCC BAA-2266 / KCTC 15142 / 195) (Dehalococcoides ethenogenes (strain 195)), this protein is Large ribosomal subunit protein bL27.